A 565-amino-acid polypeptide reads, in one-letter code: Thiol:disulfide interchange protein DsbD (565 aa).

The first 19 residues, 1-19, serve as a signal peptide directing secretion; it reads MAQRIFTLILLLCSTSVFA. Disulfide bonds link Cys122–Cys128 and Cys182–Cys304. Transmembrane regions (helical) follow at residues 163–183, 208–228, 243–263, 289–309, 323–343, 357–377, and 384–404; these read LPFSALWALLIGIGIAFTPCV, LLTFIYVQGMALTYTALGLVV, YVLIGLAIVFTLLAMSMFGLF, GVFIMGAIAGLICSPCTTAPL, WLGGGTLYLYALGMGLPLMLI, WMEQVKTAFGFVILALPVFLL, and IWGLRLWSALGVAFFGWAFIT. In terms of domain architecture, Thioredoxin spans 434 to 565; the sequence is WAFGETHTAQ…FSAHLRDRQP (132 aa). Cys480 and Cys483 are disulfide-bonded.

The protein belongs to the thioredoxin family. DsbD subfamily.

The protein resides in the cell inner membrane. It catalyses the reaction [protein]-dithiol + NAD(+) = [protein]-disulfide + NADH + H(+). The catalysed reaction is [protein]-dithiol + NADP(+) = [protein]-disulfide + NADPH + H(+). In terms of biological role, required to facilitate the formation of correct disulfide bonds in some periplasmic proteins and for the assembly of the periplasmic c-type cytochromes. Acts by transferring electrons from cytoplasmic thioredoxin to the periplasm. This transfer involves a cascade of disulfide bond formation and reduction steps. The protein is Thiol:disulfide interchange protein DsbD of Escherichia coli O6:K15:H31 (strain 536 / UPEC).